A 526-amino-acid chain; its full sequence is Glutamate--cysteine ligase (526 aa).

The protein belongs to the glutamate--cysteine ligase type 1 family. Type 1 subfamily.

It carries out the reaction L-cysteine + L-glutamate + ATP = gamma-L-glutamyl-L-cysteine + ADP + phosphate + H(+). The protein operates within sulfur metabolism; glutathione biosynthesis; glutathione from L-cysteine and L-glutamate: step 1/2. This chain is Glutamate--cysteine ligase, found in Shewanella amazonensis (strain ATCC BAA-1098 / SB2B).